The following is a 253-amino-acid chain: UPF0174 protein jhp_1494 (253 aa).

This sequence belongs to the UPF0174 family.

The sequence is that of UPF0174 protein jhp_1494 from Helicobacter pylori (strain J99 / ATCC 700824) (Campylobacter pylori J99).